The chain runs to 107 residues: Large ribosomal subunit protein uL24 (107 aa).

It belongs to the universal ribosomal protein uL24 family. In terms of assembly, part of the 50S ribosomal subunit.

In terms of biological role, one of two assembly initiator proteins, it binds directly to the 5'-end of the 23S rRNA, where it nucleates assembly of the 50S subunit. Functionally, one of the proteins that surrounds the polypeptide exit tunnel on the outside of the subunit. In Streptomyces avermitilis (strain ATCC 31267 / DSM 46492 / JCM 5070 / NBRC 14893 / NCIMB 12804 / NRRL 8165 / MA-4680), this protein is Large ribosomal subunit protein uL24.